The primary structure comprises 471 residues: Argininosuccinate lyase (471 aa).

The protein belongs to the lyase 1 family. Argininosuccinate lyase subfamily.

It is found in the cytoplasm. The catalysed reaction is 2-(N(omega)-L-arginino)succinate = fumarate + L-arginine. It participates in amino-acid biosynthesis; L-arginine biosynthesis; L-arginine from L-ornithine and carbamoyl phosphate: step 3/3. This Cereibacter sphaeroides (strain ATCC 17025 / ATH 2.4.3) (Rhodobacter sphaeroides) protein is Argininosuccinate lyase.